Reading from the N-terminus, the 570-residue chain is Urease subunit alpha 1 (570 aa).

Residues 131-570 (GGIDTHVHFI…VPMAQRYFLF (440 aa)) form the Urease domain. Positions 136, 138, and 219 each coordinate Ni(2+). At Lys-219 the chain carries N6-carboxylysine. His-221 contacts substrate. Residues His-248 and His-274 each coordinate Ni(2+). His-322 acts as the Proton donor in catalysis. Ni(2+) is bound at residue Asp-362.

The protein belongs to the metallo-dependent hydrolases superfamily. Urease alpha subunit family. In terms of assembly, heterotrimer of UreA (gamma), UreB (beta) and UreC (alpha) subunits. Three heterotrimers associate to form the active enzyme. The cofactor is Ni cation. Post-translationally, carboxylation allows a single lysine to coordinate two nickel ions.

The protein localises to the cytoplasm. The enzyme catalyses urea + 2 H2O + H(+) = hydrogencarbonate + 2 NH4(+). The protein operates within nitrogen metabolism; urea degradation; CO(2) and NH(3) from urea (urease route): step 1/1. May protect brucellae during their passage through the stomach. The major route of infection in human brucellosis is oral. This chain is Urease subunit alpha 1, found in Brucella abortus (strain 2308).